Here is a 202-residue protein sequence, read N- to C-terminus: Adenylyl-sulfate kinase (202 aa).

35 to 42 (GLSGSGKS) contributes to the ATP binding site. The Phosphoserine intermediate role is filled by Ser-109.

It belongs to the APS kinase family.

The catalysed reaction is adenosine 5'-phosphosulfate + ATP = 3'-phosphoadenylyl sulfate + ADP + H(+). The protein operates within sulfur metabolism; hydrogen sulfide biosynthesis; sulfite from sulfate: step 2/3. Its function is as follows. Catalyzes the synthesis of activated sulfate. The sequence is that of Adenylyl-sulfate kinase from Bacteroides fragilis (strain YCH46).